Consider the following 315-residue polypeptide: Aspartate carbamoyltransferase catalytic subunit (315 aa).

Arginine 61 and threonine 62 together coordinate carbamoyl phosphate. Residue lysine 90 participates in L-aspartate binding. Positions 111, 139, and 142 each coordinate carbamoyl phosphate. 2 residues coordinate L-aspartate: arginine 172 and arginine 234. 2 residues coordinate carbamoyl phosphate: leucine 274 and proline 275.

Belongs to the aspartate/ornithine carbamoyltransferase superfamily. ATCase family. In terms of assembly, heterooligomer of catalytic and regulatory chains.

The enzyme catalyses carbamoyl phosphate + L-aspartate = N-carbamoyl-L-aspartate + phosphate + H(+). It functions in the pathway pyrimidine metabolism; UMP biosynthesis via de novo pathway; (S)-dihydroorotate from bicarbonate: step 2/3. Functionally, catalyzes the condensation of carbamoyl phosphate and aspartate to form carbamoyl aspartate and inorganic phosphate, the committed step in the de novo pyrimidine nucleotide biosynthesis pathway. The chain is Aspartate carbamoyltransferase catalytic subunit from Hyperthermus butylicus (strain DSM 5456 / JCM 9403 / PLM1-5).